Consider the following 86-residue polypeptide: MFGVSTFSLKKTLRFLFFFEFFSHFRVNCYMIFDINWRKFMLCWCNPNRTTIDNLQSFTVHCIHRNRLFYKSFILQFLGRKRIILQ.

This is an uncharacterized protein from Schizosaccharomyces pombe (strain 972 / ATCC 24843) (Fission yeast).